A 359-amino-acid chain; its full sequence is MSKPPSDPPRRPPAAFAYEDEASEPRNSGRQQQGRRKPESFSENIVVTPDEDDPFINPDSDLIAPPVATPRKRRTSFGKIAAGAFGILLSLGLGLWTDRLIRDLFTRADWLGYAALGVLAIGILAVLALVIRETAGMMRLAAVQTIKAEAEAAILETRPAKARAVLARLTTLLAANPETSKGRATLKATEGEVIDPPHLMALAERELLAPLDRKARALIVNASKRVSIVTAVSPRAVVDLLYVLYEAVRLIRAMAELYGGRPGTLGMFRLLRDVLAHLAVTGSIAVGDSLVQQVLGHGLASKLSARLGEGVINGLMTARIGIAAMDLCRPLAFRTLKRPGIGDFIADLTPSMSPRGNNP.

The interval 1–50 is disordered; the sequence is MSKPPSDPPRRPPAAFAYEDEASEPRNSGRQQQGRRKPESFSENIVVTPD. A run of 2 helical transmembrane segments spans residues 77-97 and 111-131; these read FGKI…GLWT and LGYA…ALVI.

Belongs to the UPF0283 family.

It is found in the cell inner membrane. This chain is UPF0283 membrane protein RHECIAT_CH0002430, found in Rhizobium etli (strain CIAT 652).